The sequence spans 147 residues: Hemoglobin subunit beta (147 aa).

At Val-2 the chain carries N-acetylvaline. One can recognise a Globin domain in the interval 3–147 (HLTAEEKSAV…VANALAHKYH (145 aa)). Position 13 is a phosphothreonine (Thr-13). A Phosphoserine modification is found at Ser-45. Lys-60 carries the post-translational modification N6-acetyllysine. His-64 is a binding site for heme b. At Lys-83 the chain carries N6-acetyllysine. His-93 serves as a coordination point for heme b. Cys-94 bears the S-nitrosocysteine mark. An N6-acetyllysine modification is found at Lys-145.

Belongs to the globin family. Heterotetramer of two alpha chains and two beta chains. In terms of tissue distribution, red blood cells.

Its function is as follows. Involved in oxygen transport from the lung to the various peripheral tissues. This is Hemoglobin subunit beta (HBB) from Sapajus apella (Brown-capped capuchin).